The following is a 600-amino-acid chain: Arginine--tRNA ligase (600 aa).

Residues 123–133 (PNVAKPMHVGH) carry the 'HIGH' region motif.

The protein belongs to the class-I aminoacyl-tRNA synthetase family. In terms of assembly, monomer.

The protein resides in the cytoplasm. The enzyme catalyses tRNA(Arg) + L-arginine + ATP = L-arginyl-tRNA(Arg) + AMP + diphosphate. The sequence is that of Arginine--tRNA ligase from Caulobacter vibrioides (strain NA1000 / CB15N) (Caulobacter crescentus).